The primary structure comprises 193 residues: Ion-translocating oxidoreductase complex subunit A (193 aa).

The next 6 helical transmembrane spans lie at 5 to 25 (LLLL…FLGL), 39 to 59 (IGMG…SYLV), 67 to 87 (LGIE…VVQF), 102 to 122 (VLGI…VALL), 134 to 154 (IIYG…FSAM), and 171 to 191 (SIAM…TGLV).

The protein belongs to the NqrDE/RnfAE family. In terms of assembly, the complex is composed of six subunits: RnfA, RnfB, RnfC, RnfD, RnfE and RnfG.

It localises to the cell inner membrane. In terms of biological role, part of a membrane-bound complex that couples electron transfer with translocation of ions across the membrane. The protein is Ion-translocating oxidoreductase complex subunit A of Aliivibrio fischeri (strain ATCC 700601 / ES114) (Vibrio fischeri).